We begin with the raw amino-acid sequence, 698 residues long: Polyribonucleotide nucleotidyltransferase (698 aa).

D488 and D494 together coordinate Mg(2+). The 60-residue stretch at 555–614 (PRLLTIRIDPDKIRDVIGKGGATIRALTEETGTTIDISDDGKVTIASADKAAADEARRRI) folds into the KH domain. Residues 624–692 (GTVYEGKVSK…RQGRIRLSMK (69 aa)) enclose the S1 motif domain.

Belongs to the polyribonucleotide nucleotidyltransferase family. As to quaternary structure, component of the RNA degradosome, which is a multiprotein complex involved in RNA processing and mRNA degradation. Mg(2+) serves as cofactor.

The protein localises to the cytoplasm. It carries out the reaction RNA(n+1) + phosphate = RNA(n) + a ribonucleoside 5'-diphosphate. Its function is as follows. Involved in mRNA degradation. Catalyzes the phosphorolysis of single-stranded polyribonucleotides processively in the 3'- to 5'-direction. This chain is Polyribonucleotide nucleotidyltransferase, found in Alkalilimnicola ehrlichii (strain ATCC BAA-1101 / DSM 17681 / MLHE-1).